We begin with the raw amino-acid sequence, 133 residues long: Ribonuclease VapC17 (133 aa).

The Mg(2+) site is built by Asp-7 and Asp-93. Residues 30 to 118 enclose the PINc domain; sequence AICDIGELEW…HHDRDYKRIA (89 aa).

This sequence belongs to the PINc/VapC protein family. Mg(2+) serves as cofactor.

Its function is as follows. Toxic component of a type II toxin-antitoxin (TA) system. An RNase. The cognate antitoxin is VapB17. The protein is Ribonuclease VapC17 of Mycobacterium tuberculosis (strain CDC 1551 / Oshkosh).